The sequence spans 71 residues: uncharacterized protein (71 aa).

This is an uncharacterized protein from Autographa californica nuclear polyhedrosis virus (AcMNPV).